The following is a 58-amino-acid chain: U11-myrmicitoxin-Tb1a (58 aa).

The propeptide occupies 1–24 (LAMAMGDAVADAQARAMAAAYAIA). Cys-34 and Cys-57 form a disulfide bridge.

The protein belongs to the formicidae venom precursor-01 superfamily. As to expression, expressed by the venom gland.

Its subcellular location is the secreted. It localises to the target cell membrane. Functionally, neurotoxin that causes irreversible rapid flaccid paralysis in blowflies and honeybees upon intrathoracic injection. Causes a quick and irreversible cytolytic effect (at 10 uM) indicating it possibly acts as a pore-forming peptide. Shows only weak effect on aphids (A.pisum) at high doses 24 hours post intrathoracic injection. In vitro, is not cytotoxic on the dipteran S2 Drosophila embryonic cell line. In Tetramorium bicarinatum (Tramp ant), this protein is U11-myrmicitoxin-Tb1a.